The primary structure comprises 344 residues: Dihydroorotase (344 aa).

Zn(2+) contacts are provided by His-14 and His-16. Substrate is bound by residues 16–18 and Asn-42; that span reads HLR. Zn(2+) is bound by residues Lys-100, His-137, and His-175. Position 100 is an N6-carboxylysine (Lys-100). His-137 is a substrate binding site. Substrate is bound at residue Leu-220. A Zn(2+)-binding site is contributed by Asp-248. The active site involves Asp-248. The substrate site is built by His-252 and Ala-264.

Belongs to the metallo-dependent hydrolases superfamily. DHOase family. Class II DHOase subfamily. In terms of assembly, homodimer. It depends on Zn(2+) as a cofactor.

The enzyme catalyses (S)-dihydroorotate + H2O = N-carbamoyl-L-aspartate + H(+). It participates in pyrimidine metabolism; UMP biosynthesis via de novo pathway; (S)-dihydroorotate from bicarbonate: step 3/3. In terms of biological role, catalyzes the reversible cyclization of carbamoyl aspartate to dihydroorotate. The protein is Dihydroorotase of Ralstonia pickettii (strain 12J).